The following is a 239-amino-acid chain: Tetraspanin-9 (239 aa).

Over 1-13 the chain is Cytoplasmic; it reads MARGCLCCLKYMM. A helical membrane pass occupies residues 14 to 34; the sequence is FLFNLIFWLCGCGLLGVGIWL. Residues 35-55 are Extracellular-facing; it reads SVSQGNFATFSPSFPSLSAAN. The helical transmembrane segment at 56–76 threads the bilayer; it reads LVIAIGTIVMVTGFLGCLGAI. The Cytoplasmic segment spans residues 77–85; the sequence is KENRCLLLS. A helical membrane pass occupies residues 86–106; sequence FFIVLLIILLAELILIILFFV. Over 107-203 the chain is Extracellular; it reads YMDKVNENAR…VKMWFDDNKH (97 aa). Asn-180 is a glycosylation site (N-linked (GlcNAc...) asparagine). A helical transmembrane segment spans residues 204-224; it reads VLGTVGMCILIMQILGMAFSM. At 225-239 the chain is on the cytoplasmic side; that stretch reads TLFQHIHRTGKKYDA.

This sequence belongs to the tetraspanin (TM4SF) family. In terms of assembly, found in a complex with GP6. In terms of processing, glycosylated.

The protein localises to the membrane. The protein is Tetraspanin-9 (TSPAN9) of Sus scrofa (Pig).